Reading from the N-terminus, the 1151-residue chain is MSSNIHANHLSLDASSSSSSSSSSSSSSSSSSSVHEPKMDALIIPVTMEVPCDSRGQRMWWAFLASSMVTFFGGLFIILLWRTLKYLWTVCCHCGGKTKEAQKINNGSSQADGTLKPVDEKEEAVAAEVGWMTSVKDWAGVMISAQTLTGRVLVVLVFALSIGALVIYFIDSSNPIESCQNFYKDFTLQIDMAFNVFFLLYFGLRFIAANDKLWFWLEVNSVVDFFTVPPVFVSVYLNRSWLGLRFLRALRLIQFSEILQFLNILKTSNSIKLVNLLSIFISTWLTAAGFIHLVENSGDPWENFQNNQALTYWECVYLLMVTMSTVGYGDVYAKTTLGRLFMVFFILGGLAMFASYVPEIIELIGNRKKYGGSYSAVSGRKHIVVCGHITLESVSNFLKDFLHKDRDDVNVEIVFLHNISPNLELEALFKRHFTQVEFYQGSVLNPHDLARVKIESADACLILANKYCADPDAEDASNIMRVISIKNYHPKIRIITQMLQYHNKAHLLNIPSWNWKEGDDAICLAELKLGFIAQSCLAQGLSTMLANLFSMRSFIKIEEDTWQKYYLEGVSNEMYTEYLSSAFVGLSFPTVCELCFVKLKLLMIAIEYKSANRESRILINPGNHLKIQEGTLGFFIASDAKEVKRAFFYCKACHDDITDPKRIKKCGCKRLEDEQPSTLSPKKKQRNGGMRNSPNSSPKLMRHDPLLIPGNDQIDNMDSNVKKYDSTGMFHWCAPKEIEKVILTRSEAAMTVLSGHVVVCIFGDVSSALIGLRNLVMPLRASNFHYHELKHIVFVGSIEYLKREWETLHNFPKVSILPGTPLSRADLRAVNINLCDMCVILSANQNNIDDTSLQDKECILASLNIKSMQFDDSIGVLQANSQGFTPPGMDRSSPDNSPVHGMLRQPSITTGVNIPIITELVNDTNVQFLDQDDDDDPDTELYLTQPFACGTAFAVSVLDSLMSATYFNDNILTLIRTLVTGGATPELEALIAEENALRGGYSTPQTLANRDRCRVAQLALLDGPFADLGDGGCYGDLFCKALKTYNMLCFGIYRLRDAHLSTPSQCTKRYVITNPPYEFELVPTDLIFCLMQFDHNAGQSRASLSHSSHSSQSSSKKSSSVHSIPSTANRQNRPKSRESRDKQKYVQEERL.

Residues 1–36 (MSSNIHANHLSLDASSSSSSSSSSSSSSSSSSSVHE) are disordered. Topologically, residues 1–59 (MSSNIHANHLSLDASSSSSSSSSSSSSSSSSSSVHEPKMDALIIPVTMEVPCDSRGQRM) are extracellular. Low complexity predominate over residues 15 to 33 (SSSSSSSSSSSSSSSSSSS). Residues 60–80 (WWAFLASSMVTFFGGLFIILL) form a helical membrane-spanning segment. Residues 81 to 151 (WRTLKYLWTV…MISAQTLTGR (71 aa)) are Cytoplasmic-facing. 3 S-palmitoyl cysteine lipidation sites follow: Cys-91, Cys-92, and Cys-94. The chain crosses the membrane as a helical span at residues 152–172 (VLVVLVFALSIGALVIYFIDS). The Extracellular segment spans residues 173–187 (SNPIESCQNFYKDFT). A helical transmembrane segment spans residues 188 to 208 (LQIDMAFNVFFLLYFGLRFIA). The Cytoplasmic portion of the chain corresponds to 209-212 (ANDK). The chain crosses the membrane as a helical span at residues 213–233 (LWFWLEVNSVVDFFTVPPVFV). At 234-237 (SVYL) the chain is on the extracellular side. The helical; Voltage-sensor transmembrane segment at 238 to 258 (NRSWLGLRFLRALRLIQFSEI) threads the bilayer. The Cytoplasmic segment spans residues 259-273 (LQFLNILKTSNSIKL). Residues 274-294 (VNLLSIFISTWLTAAGFIHLV) form a helical membrane-spanning segment. The Extracellular portion of the chain corresponds to 295 to 308 (ENSGDPWENFQNNQ). An intramembrane region (pore-forming) is located at residues 309–331 (ALTYWECVYLLMVTMSTVGYGDV). The short motif at 325-328 (TVGY) is the Selectivity for potassium element. Residues 332 to 340 (YAKTTLGRL) lie on the Extracellular side of the membrane. Residues 341 to 361 (FMVFFILGGLAMFASYVPEII) traverse the membrane as a helical segment. Topologically, residues 362-1151 (ELIGNRKKYG…KQKYVQEERL (790 aa)) are cytoplasmic. One can recognise an RCK N-terminal 1 domain in the interval 380-522 (RKHIVVCGHI…WNWKEGDDAI (143 aa)). Mg(2+)-binding residues include Glu-412, Gln-435, and Glu-437. Residues 529 to 549 (LGFIAQSCLAQGLSTMLANLF) form a segment S7 region. A segment S8 region spans residues 586-606 (LSFPTVCELCFVKLKLLMIAI). Residues 650–654 (CKACH) form a heme-binding motif region. The interval 674–702 (EQPSTLSPKKKQRNGGMRNSPNSSPKLMR) is disordered. Phosphothreonine is present on Thr-678. 3 positions are modified to phosphoserine: Ser-680, Ser-693, and Ser-697. Residues 752-772 (VLSGHVVVCIFGDVSSALIGL) form a segment S9 region. Positions 754 to 898 (SGHVVVCIFG…MDRSSPDNSP (145 aa)) constitute an RCK N-terminal 2 domain. Phosphothreonine is present on Thr-885. Ser-893 and Ser-897 each carry phosphoserine. The Calcium bowl signature appears at 918 to 940 (TELVNDTNVQFLDQDDDDDPDTE). The Ca(2+) site is built by Gln-927, Asp-930, Asp-933, and Asp-935. A segment S10 region spans residues 947-967 (FACGTAFAVSVLDSLMSATYF). Residues 1101-1126 (RASLSHSSHSSQSSSKKSSSVHSIPS) are compositionally biased toward low complexity. The disordered stretch occupies residues 1101–1151 (RASLSHSSHSSQSSSKKSSSVHSIPSTANRQNRPKSRESRDKQKYVQEERL). Basic and acidic residues predominate over residues 1135–1151 (KSRESRDKQKYVQEERL). Ser-1136 and Ser-1139 each carry phosphoserine.

It belongs to the potassium channel family. Calcium-activated (TC 1.A.1.3) subfamily. KCa1.1/KCNMA1 sub-subfamily. As to quaternary structure, homotetramer; which constitutes the calcium-activated potassium channel. Interacts with beta subunits KCNMB1, KCNMB2, KCNMB3 and KCNMB4. Interacts with gamma subunits LRRC26, LRRC38, LRRC52 and LRRC55. Beta and gamma subunits are accessory, and modulate its activity. Interacts with RAB11B. In terms of processing, phosphorylated. Phosphorylation by kinases such as PKA and/or PKG. In smooth muscles, phosphorylation affects its activity. Post-translationally, palmitoylation by ZDHHC22 and ZDHHC23 within the intracellular linker between the S0 and S1 transmembrane domains regulates localization to the plasma membrane. Depalmitoylated by LYPLA1 and LYPLAL1, leading to retard exit from the trans-Golgi network.

The protein localises to the cell membrane. It carries out the reaction K(+)(in) = K(+)(out). Its activity is regulated as follows. Ethanol and carbon monoxide-bound heme increase channel activation. Heme inhibits channel activation. Potassium channel activated by both membrane depolarization or increase in cytosolic Ca(2+) that mediates export of K(+). It is also activated by the concentration of cytosolic Mg(2+). Its activation dampens the excitatory events that elevate the cytosolic Ca(2+) concentration and/or depolarize the cell membrane. It therefore contributes to repolarization of the membrane potential. Plays a key role in controlling excitability in a number of systems, such as regulation of the contraction of smooth muscle, the tuning of hair cells in the cochlea, regulation of transmitter release, and innate immunity. In smooth muscles, its activation by high level of Ca(2+), caused by ryanodine receptors in the sarcoplasmic reticulum, regulates the membrane potential. In cochlea cells, its number and kinetic properties partly determine the characteristic frequency of each hair cell and thereby helps to establish a tonotopic map. Kinetics of KCNMA1 channels are determined by alternative splicing, phosphorylation status and its combination with modulating beta subunits. Highly sensitive to both iberiotoxin (IbTx) and charybdotoxin (CTX). This Macaca mulatta (Rhesus macaque) protein is Calcium-activated potassium channel subunit alpha-1 (KCNMA1).